An 834-amino-acid polypeptide reads, in one-letter code: ATP-dependent RNA helicase ddx23 (834 aa).

Disordered regions lie at residues 1–245 (MDPP…TQFS) and 322–371 (FGGY…GKQI). A compositionally biased stretch (basic and acidic residues) spans 10–25 (SKRDTKKKDEVNKEQP). The span at 42–54 (SNPTQEEPTNTLQ) shows a compositional bias: polar residues. 4 stretches are compositionally biased toward basic and acidic residues: residues 70–110 (GLKE…DYRD), 117–164 (GRDR…RRDG), 171–205 (RRRD…RDND), and 231–245 (DIHK…TQFS). Residues 328–362 (NNNNNGNHYNGNIYNNNNNNNNNNNNNNNINNNNN) are compositionally biased toward low complexity. The Q motif motif lies at 413 to 441 (RTWQESNLPREILEAIRQLGYEKPSPIQM). In terms of domain architecture, Helicase ATP-binding spans 444–643 (IPISLTGRDI…KKYLRRPCTI (200 aa)). 457–464 (AETGSGKT) contributes to the ATP binding site. A DEAD box motif is present at residues 570-573 (DEAD). The Helicase C-terminal domain occupies 654 to 815 (RIRQTVIFVK…IVPIELLKHP (162 aa)). The tract at residues 813 to 834 (KHPSSQQKHGSSKDHNKSVIFK) is disordered. A compositionally biased stretch (basic and acidic residues) spans 823-834 (SSKDHNKSVIFK).

The protein belongs to the DEAD box helicase family. DDX23/PRP28 subfamily.

The protein resides in the cytoplasm. It is found in the nucleus. The enzyme catalyses ATP + H2O = ADP + phosphate + H(+). Probable ATP-dependent RNA helicase which may be involved in mRNA splicing. This is ATP-dependent RNA helicase ddx23 (helB2) from Dictyostelium discoideum (Social amoeba).